Here is a 100-residue protein sequence, read N- to C-terminus: UPF0125 protein HD_1828 (100 aa).

It belongs to the UPF0125 (RnfH) family.

This is UPF0125 protein HD_1828 from Haemophilus ducreyi (strain 35000HP / ATCC 700724).